Reading from the N-terminus, the 203-residue chain is Glutathione-specific gamma-glutamylcyclotransferase (203 aa).

12 to 17 (VFGYGS) contributes to the substrate binding site. Glutamate 105 serves as the catalytic Proton acceptor.

Belongs to the gamma-glutamylcyclotransferase family. ChaC subfamily.

It is found in the cytoplasm. The protein resides in the nucleus. The enzyme catalyses glutathione = L-cysteinylglycine + 5-oxo-L-proline. Gamma-glutamylcyclotransferase acting specifically on glutathione, but not on other gamma-glutamyl peptides. Allows utilization of gluthathione through subsequent cleavage of the Cys-Gly dipeptide by Cys-Gly metallodipeptidase dug1. This is Glutathione-specific gamma-glutamylcyclotransferase from Schizosaccharomyces pombe (strain 972 / ATCC 24843) (Fission yeast).